A 591-amino-acid polypeptide reads, in one-letter code: Eukaryotic translation initiation factor 3 subunit D (591 aa).

Residues serine 100–arginine 159 form a disordered region. Basic residues predominate over residues phenylalanine 123 to arginine 135. Over residues glutamine 140–arginine 159 the composition is skewed to basic and acidic residues. The tract at residues glutamine 309–leucine 323 is RNA gate. Over residues aspartate 549–glutamine 560 the composition is skewed to acidic residues. Positions aspartate 549 to alanine 591 are disordered. Residues lysine 579–alanine 591 are compositionally biased toward basic and acidic residues.

This sequence belongs to the eIF-3 subunit D family. Component of the eukaryotic translation initiation factor 3 (eIF-3) complex, which is composed of at least 13 different subunits.

It localises to the cytoplasm. MRNA cap-binding component of the eukaryotic translation initiation factor 3 (eIF-3) complex, which is involved in protein synthesis of a specialized repertoire of mRNAs and, together with other initiation factors, stimulates binding of mRNA and methionyl-tRNAi to the 40S ribosome. The eIF-3 complex specifically targets and initiates translation of a subset of mRNAs involved in cell proliferation. In the eIF-3 complex, eif3d specifically recognizes and binds the 7-methylguanosine cap of a subset of mRNAs. The protein is Eukaryotic translation initiation factor 3 subunit D (TIF3D1) of Arabidopsis thaliana (Mouse-ear cress).